Reading from the N-terminus, the 73-residue chain is Toxin Td10 (73 aa).

The signal sequence occupies residues 1–7 (IGMVVEC). The 63-residue stretch at 8–70 (KDGYLMGPDG…VWERATNRCG (63 aa)) folds into the LCN-type CS-alpha/beta domain. 4 disulfide bridges follow: Cys-18–Cys-69, Cys-22–Cys-44, Cys-30–Cys-50, and Cys-34–Cys-52. Position 71 is a lysine amide (Lys-71).

Belongs to the long (4 C-C) scorpion toxin superfamily. Sodium channel inhibitor family. Beta subfamily. Expressed by the venom gland.

It localises to the secreted. In terms of biological role, beta toxins bind voltage-independently at site-4 of sodium channels (Nav) and shift the voltage of activation toward more negative potentials thereby affecting sodium channel activation and promoting spontaneous and repetitive firing. The polypeptide is Toxin Td10 (Tityus discrepans (Venezuelan scorpion)).